The primary structure comprises 518 residues: Probable triacylglyceride transporter BCG_1471c (518 aa).

14 helical membrane passes run 7 to 27, 46 to 66, 76 to 96, 110 to 130, 144 to 164, 170 to 190, 201 to 221, 230 to 250, 270 to 290, 308 to 328, 337 to 357, 379 to 401, 408 to 428, and 475 to 495; these read VAISAGSLAVLLGALDTYVVV, RITWIVTMYLLGYIAAMPLLG, LMLQVSLAGFIIGSVVTALAG, IQGVASGALLPITLALGADLW, AAQELGSVLGPLYGIFIVWLL, VFWINVPLTAIAMVMIHFSLP, VDLVGGLLLALALGLAVIGLY, VLPDYGAPLLVGALVAAVAFF, PFLSALGASVAAGAALMVTLV, AGMLLWFLIALPIGAVTGGWI, VAFAGLLIAAYGYWLISHWPV, LVVAGLGLGLVIGPLSSATLRVV, IASAAVVVARMTGMLIGVAAL, and IFTITAIVCVFGAVLGLLISG.

The protein belongs to the major facilitator superfamily.

The protein resides in the cell inner membrane. Inhibited by CCCP and valinomycin. In association with lipoprotein LprG probably transports triacylglycerides (TAG) across the inner cell membrane into the periplasm; TAG probably regulates lipid metabolism and growth regulation. Confers resistance to several drugs such as rifampicin, clofazimine and novobiocin; is also part of the oxidative stress response and is needed to maintain normal growth characteristics. Probably an efflux transporter, involved in maintaining correct cell wall permeability. Probably required with LprG for normal surface localization of lipoarabinomannan (LAM). Required for optimal growth on cholesterol. The protein is Probable triacylglyceride transporter BCG_1471c of Mycobacterium bovis (strain BCG / Pasteur 1173P2).